The following is a 215-amino-acid chain: Putative O-methyltransferase MAB_1361c (215 aa).

S-adenosyl-L-methionine-binding positions include valine 42, glutamate 64, 66–67 (GT), serine 72, aspartate 90, and valine 91. Position 138 (aspartate 138) interacts with substrate.

This sequence belongs to the class I-like SAM-binding methyltransferase superfamily. Cation-dependent O-methyltransferase family.

In Mycobacteroides abscessus (strain ATCC 19977 / DSM 44196 / CCUG 20993 / CIP 104536 / JCM 13569 / NCTC 13031 / TMC 1543 / L948) (Mycobacterium abscessus), this protein is Putative O-methyltransferase MAB_1361c.